The sequence spans 399 residues: MMPERIILAYSGGLDTSVAINWIGKETSHEVVAVVIDLGQGGEDMEVVRQRALDCGAVEAIVVDARDEFAEGYCLPTVLNNALYMDRYPLVSAISRPLIVKHLVAAARAHGGSIVAHGCTGKGNDQVRFEVGFASLAPDLEILAPVRDYAWTREKAIAFAEENAIPINVTKRSPFSIDQNVWGRAVETGFLEHLWHAPTKEVYSYTDDPTINWNTPDEVIVGFEHGVPVSIDGSPVSMLGAIEALNRRAGAQGVGRLDVVEDRLVGIKSREIYEAPGAMVLITAHAELEHVTLERELGRFKRQTDRRWAELVYDGLWYSPLKTALESFVAATQQHVTGEVRMVLHGGHIAVNGRRSAESLYDFNLATYDEGDTFDQSAARGFVYVYGLPSKLAARRDLR.

9–17 (AYSGGLDTS) serves as a coordination point for ATP. Tyr88 is an L-citrulline binding site. Gly118 provides a ligand contact to ATP. The L-aspartate site is built by Thr120, Asn124, and Asp125. Asn124 is a binding site for L-citrulline. 4 residues coordinate L-citrulline: Arg128, Ser176, Glu261, and Tyr273.

Belongs to the argininosuccinate synthase family. Type 1 subfamily. As to quaternary structure, homotetramer.

It localises to the cytoplasm. It carries out the reaction L-citrulline + L-aspartate + ATP = 2-(N(omega)-L-arginino)succinate + AMP + diphosphate + H(+). It participates in amino-acid biosynthesis; L-arginine biosynthesis; L-arginine from L-ornithine and carbamoyl phosphate: step 2/3. This chain is Argininosuccinate synthase, found in Mycobacterium leprae (strain TN).